Reading from the N-terminus, the 380-residue chain is Chaperone protein DnaJ (380 aa).

The 66-residue stretch at 5–70 (DFYDVLGVNR…QKRAAYDQYG (66 aa)) folds into the J domain. The CR-type zinc-finger motif lies at 139 to 217 (GCEKQIRIPT…CHGAGRVKSQ (79 aa)). Zn(2+) contacts are provided by Cys-152, Cys-155, Cys-169, Cys-172, Cys-191, Cys-194, Cys-205, and Cys-208. CXXCXGXG motif repeat units lie at residues 152 to 159 (CSHCHGSG), 169 to 176 (CPTCGGAG), 191 to 198 (CPTCHGSG), and 205 to 212 (CNICHGAG).

It belongs to the DnaJ family. As to quaternary structure, homodimer. It depends on Zn(2+) as a cofactor.

The protein localises to the cytoplasm. Participates actively in the response to hyperosmotic and heat shock by preventing the aggregation of stress-denatured proteins and by disaggregating proteins, also in an autonomous, DnaK-independent fashion. Unfolded proteins bind initially to DnaJ; upon interaction with the DnaJ-bound protein, DnaK hydrolyzes its bound ATP, resulting in the formation of a stable complex. GrpE releases ADP from DnaK; ATP binding to DnaK triggers the release of the substrate protein, thus completing the reaction cycle. Several rounds of ATP-dependent interactions between DnaJ, DnaK and GrpE are required for fully efficient folding. Also involved, together with DnaK and GrpE, in the DNA replication of plasmids through activation of initiation proteins. This chain is Chaperone protein DnaJ, found in Laribacter hongkongensis (strain HLHK9).